A 360-amino-acid polypeptide reads, in one-letter code: Aminomethyltransferase (360 aa).

It belongs to the GcvT family. In terms of assembly, the glycine cleavage system is composed of four proteins: P, T, L and H.

It catalyses the reaction N(6)-[(R)-S(8)-aminomethyldihydrolipoyl]-L-lysyl-[protein] + (6S)-5,6,7,8-tetrahydrofolate = N(6)-[(R)-dihydrolipoyl]-L-lysyl-[protein] + (6R)-5,10-methylene-5,6,7,8-tetrahydrofolate + NH4(+). Its function is as follows. The glycine cleavage system catalyzes the degradation of glycine. This chain is Aminomethyltransferase, found in Exiguobacterium sibiricum (strain DSM 17290 / CCUG 55495 / CIP 109462 / JCM 13490 / 255-15).